The chain runs to 577 residues: Calcium-dependent protein kinase 22 (577 aa).

A lipid anchor (N-myristoyl glycine) is attached at Gly2. In terms of domain architecture, Protein kinase spans 105 to 368; sequence YRLGAELGRG…AKEVLEHPWL (264 aa). ATP-binding positions include 111-119 and Lys134; that span reads LGRGEFGVT. Catalysis depends on Asp234, which acts as the Proton acceptor. An autoinhibitory domain region spans residues 374-404; sequence APNVSLGEIVRSRLMQFSAMNKFKKKALGVV. 4 EF-hand domains span residues 411–446, 447–482, 483–518, and 520–553; these read EEMD…NGHP, VPET…IKKM, SNEE…ELGP, and EQVV…GSDW. Positions 424, 426, 428, 430, 435, 460, 462, 464, 466, 471, 496, 498, 500, 507, 531, 533, 535, 537, and 542 each coordinate Ca(2+).

Belongs to the protein kinase superfamily. Ser/Thr protein kinase family. CDPK subfamily.

It is found in the membrane. It catalyses the reaction L-seryl-[protein] + ATP = O-phospho-L-seryl-[protein] + ADP + H(+). It carries out the reaction L-threonyl-[protein] + ATP = O-phospho-L-threonyl-[protein] + ADP + H(+). With respect to regulation, activated by calcium. Autophosphorylation may play an important role in the regulation of the kinase activity. In terms of biological role, may play a role in signal transduction pathways that involve calcium as a second messenger. The protein is Calcium-dependent protein kinase 22 of Oryza sativa subsp. japonica (Rice).